The sequence spans 137 residues: Small ribosomal subunit protein uS12 (137 aa).

The segment at 1–44 is disordered; sequence MPTINQLVRKGRKSRTSKSDAPALNFGYNSMKKKATDNPAPQKR. Aspartate 102 carries the post-translational modification 3-methylthioaspartic acid.

This sequence belongs to the universal ribosomal protein uS12 family. In terms of assembly, part of the 30S ribosomal subunit. Contacts proteins S8 and S17. May interact with IF1 in the 30S initiation complex.

Functionally, with S4 and S5 plays an important role in translational accuracy. Interacts with and stabilizes bases of the 16S rRNA that are involved in tRNA selection in the A site and with the mRNA backbone. Located at the interface of the 30S and 50S subunits, it traverses the body of the 30S subunit contacting proteins on the other side and probably holding the rRNA structure together. The combined cluster of proteins S8, S12 and S17 appears to hold together the shoulder and platform of the 30S subunit. The protein is Small ribosomal subunit protein uS12 of Latilactobacillus sakei subsp. sakei (strain 23K) (Lactobacillus sakei subsp. sakei).